The chain runs to 186 residues: MFNKNQGSNGGSSSNVGIGADSPYLQKARSGKTEIRELEAVFKKFDVNGDGKISSKELGAIMTSLGHEVPEEELEKAITEIDRKGDGYINFEEFVELNTKGMDQNDVLENLKDAFSVYDIDGNGSISAEELHEVLRSLGDECSIAECRKMIGGVDKDGDGTIDFEEFKIMMTMGSRRDNVMGGGPR.

The span at 1-17 shows a compositional bias: low complexity; that stretch reads MFNKNQGSNGGSSSNVG. The tract at residues 1-23 is disordered; it reads MFNKNQGSNGGSSSNVGIGADSP. 4 consecutive EF-hand domains span residues 33-68, 69-104, 106-141, and 142-177; these read TEIR…LGHE, VPEE…GMDQ, DVLE…LGDE, and CSIA…GSRR. The Ca(2+) site is built by D46, N48, D50, K52, and E57. Positions 119, 121, 123, 125, 130, 155, 157, 159, 161, and 166 each coordinate Ca(2+).

Its function is as follows. Potential calcium sensor. This Arabidopsis thaliana (Mouse-ear cress) protein is Probable calcium-binding protein CML25 (CML25).